Reading from the N-terminus, the 416-residue chain is Lactose permease (416 aa).

The Cytoplasmic segment spans residues 1 to 13 (MKLSELAPRERHN). Residues 14 to 34 (FIYFMLFFFFYYFIMSAYFPF) form a helical membrane-spanning segment. The Periplasmic segment spans residues 35-50 (FPVWLAEVNHLTKTET). A helical membrane pass occupies residues 51–71 (GIVFSCISLFAIIFQPVFGLI). Residues 72–80 (SDKLGLRKH) are Cytoplasmic-facing. A helical membrane pass occupies residues 81 to 101 (LLWTITILLILFAPFFIFVFS). P102 is a topological domain (periplasmic). A helical transmembrane segment spans residues 103 to 123 (LLQMNIMAGALVGGVYLGIVF). Residues 124–149 (SSRSGAVEAYIERVSRANRFEYGKVR) are Cytoplasmic-facing. A run of 2 helical transmembrane segments spans residues 150-170 (VSGC…FSID) and 171-191 (PNIT…LLWV). Topologically, residues 192-223 (SKPESSNSAEVIDALGANRQAFSMRTAAELFR) are cytoplasmic. The helical transmembrane segment at 224 to 244 (MPRFWGFIIYVVGVASVYDVF) threads the bilayer. The Periplasmic segment spans residues 245–267 (DQQFANFFKGFFSSPQRGTEVFG). Residues 268 to 288 (FVTTGGELLNALIMFCAPAII) traverse the membrane as a helical segment. The Cytoplasmic portion of the chain corresponds to 289–295 (NRIGAKN). A run of 2 helical transmembrane segments spans residues 296–316 (ALLI…FATS) and 317–337 (AVEV…LLVG). At 338–353 (TFKYISSAFKGKLSAT) the chain is on the cytoplasmic side. Residues 354–374 (LFLIGFNLSKQLSSVVLSAWV) traverse the membrane as a helical segment. At 375-384 (GRMYDTVGFH) the chain is on the periplasmic side. Residues 385 to 405 (QAYLILGCITLSFTVISLFTL) traverse the membrane as a helical segment. The Cytoplasmic segment spans residues 406-416 (KGSKTLLPATA).

The protein belongs to the major facilitator superfamily. Oligosaccharide:H(+) symporter (OHS) (TC 2.A.1.5) family.

The protein localises to the cell inner membrane. The catalysed reaction is lactose(in) + H(+)(in) = lactose(out) + H(+)(out). Functionally, responsible for transport of beta-galactosides into the cell, with the concomitant import of a proton (symport system). This Klebsiella oxytoca protein is Lactose permease (lacY).